The primary structure comprises 199 residues: MTRLVVATRNKGKLREIAAILDGLPFTLLSLEDFPDFPEVEEDGKTFEENALKKASVAANITGLPALADDSGLVVDALDGKPGVYSARYSGENASDEANNAKLLSELESVPYEERTAAFRCTIALCSPGGKRYTFSGELHGVILDSPRGTGGFGYDPLFFVSEKGATMAELPLEAKNAVSHRGRALALLKDHLGWQGIE.

Residue 8-13 coordinates substrate; it reads TRNKGK. Glutamate 41 and aspartate 70 together coordinate Mg(2+). The active-site Proton acceptor is aspartate 70. Substrate-binding positions include serine 71, 153–156, lysine 176, and 181–182; these read FGYD and HR.

This sequence belongs to the HAM1 NTPase family. In terms of assembly, homodimer. Mg(2+) is required as a cofactor.

The enzyme catalyses XTP + H2O = XMP + diphosphate + H(+). It catalyses the reaction dITP + H2O = dIMP + diphosphate + H(+). The catalysed reaction is ITP + H2O = IMP + diphosphate + H(+). In terms of biological role, pyrophosphatase that catalyzes the hydrolysis of nucleoside triphosphates to their monophosphate derivatives, with a high preference for the non-canonical purine nucleotides XTP (xanthosine triphosphate), dITP (deoxyinosine triphosphate) and ITP. Seems to function as a house-cleaning enzyme that removes non-canonical purine nucleotides from the nucleotide pool, thus preventing their incorporation into DNA/RNA and avoiding chromosomal lesions. This chain is dITP/XTP pyrophosphatase, found in Geobacter sulfurreducens (strain ATCC 51573 / DSM 12127 / PCA).